A 289-amino-acid polypeptide reads, in one-letter code: Glycine--tRNA ligase alpha subunit (289 aa).

The protein belongs to the class-II aminoacyl-tRNA synthetase family. As to quaternary structure, tetramer of two alpha and two beta subunits.

The protein localises to the cytoplasm. The catalysed reaction is tRNA(Gly) + glycine + ATP = glycyl-tRNA(Gly) + AMP + diphosphate. The protein is Glycine--tRNA ligase alpha subunit of Prochlorococcus marinus subsp. pastoris (strain CCMP1986 / NIES-2087 / MED4).